Here is a 579-residue protein sequence, read N- to C-terminus: uncharacterized protein (579 aa).

This sequence belongs to the UbiD family.

This is an uncharacterized protein from Chlamydia muridarum (strain MoPn / Nigg).